The chain runs to 572 residues: Potassium-transporting ATPase potassium-binding subunit (572 aa).

11 helical membrane-spanning segments follow: residues 5–25 (LAAGLQIGFVILALAIAYVPL), 71–91 (VGYTLSLLGFSFASVIFLYVL), 97–117 (VLPLSGGLGAVSPAVAFNTAV), 142–162 (GLAVQNFVSAAVGLTVAVALI), 188–208 (ILLPLSFAVALILLSQGTIQS), 258–278 (PTPLSNVIEILAILIIPVCLT), 292–312 (LTVLSVMGTLFGGMLALVTWA), 387–407 (GLYGILVLAIIAVFVGGLLVG), 422–442 (ITMAALSVLVMPALVLVGTGI), 500–520 (LGMAMLLGRFLPIIFTLALAG), and 548–568 (GTVLLVAALTFFPALALGPIA).

Belongs to the KdpA family. As to quaternary structure, the system is composed of three essential subunits: KdpA, KdpB and KdpC.

The protein resides in the cell membrane. Its function is as follows. Part of the high-affinity ATP-driven potassium transport (or Kdp) system, which catalyzes the hydrolysis of ATP coupled with the electrogenic transport of potassium into the cytoplasm. This subunit binds the extracellular potassium ions and delivers the ions to the membrane domain of KdpB through an intramembrane tunnel. This chain is Potassium-transporting ATPase potassium-binding subunit, found in Mycobacteroides abscessus (strain ATCC 19977 / DSM 44196 / CCUG 20993 / CIP 104536 / JCM 13569 / NCTC 13031 / TMC 1543 / L948) (Mycobacterium abscessus).